The following is a 465-amino-acid chain: Argininosuccinate lyase (465 aa).

This sequence belongs to the lyase 1 family. Argininosuccinate lyase subfamily.

It is found in the cytoplasm. It catalyses the reaction 2-(N(omega)-L-arginino)succinate = fumarate + L-arginine. It participates in amino-acid biosynthesis; L-arginine biosynthesis; L-arginine from L-ornithine and carbamoyl phosphate: step 3/3. In Rhodopseudomonas palustris (strain BisB18), this protein is Argininosuccinate lyase.